The following is a 336-amino-acid chain: Probable allantoicase (336 aa).

Belongs to the allantoicase family.

It carries out the reaction allantoate + H2O = (S)-ureidoglycolate + urea. It functions in the pathway nitrogen metabolism; (S)-allantoin degradation; (S)-ureidoglycolate from allantoate (aminidohydrolase route): step 1/1. This Acinetobacter baumannii (strain ATCC 17978 / DSM 105126 / CIP 53.77 / LMG 1025 / NCDC KC755 / 5377) protein is Probable allantoicase.